Here is a 706-residue protein sequence, read N- to C-terminus: SPX domain-containing membrane protein OsI_32082 (706 aa).

One can recognise an SPX domain in the interval 2–145; it reads VNFSNKLTKD…GYKFTDYYVR (144 aa). The next 6 helical transmembrane spans lie at 251 to 271, 281 to 301, 318 to 338, 340 to 359, 378 to 398, and 414 to 434; these read MSLVLNLANTFLYMVNTYIVV, LGAAATACGAVIGSMAVAQVF, LLFSSVVLLLGNVMYAMAFDL, SLTILLLGRVLCGMGSARAV, AAFVSASALGMACGPALAGLL, and LPGWIMAFGWLVYLIWLWISF. The interval 475-498 is disordered; it reads SEQDEEDDNGDEEHNETLSSSTTT. The segment covering 476–488 has biased composition (acidic residues); the sequence is EQDEEDDNGDEEH. Transmembrane regions (helical) follow at residues 520–540, 554–574, 583–603, 611–631, and 678–698; these read LLIYFMLKYAMEILLAESSVV, VFLAVLGLSVLPVNAIVGTYI, ILVASEMALLAGVMLSFKLTV, VCSAVLTFVSAEVVEGVNLSL, and LLNATLLPALLVCVASIAATL.

Belongs to the major facilitator superfamily.

Its subcellular location is the membrane. This is SPX domain-containing membrane protein OsI_32082 from Oryza sativa subsp. indica (Rice).